The primary structure comprises 110 residues: G antigen 2E (110 aa).

The segment at 1–110 is disordered; the sequence is MSWRGRSTYY…NPEEVKTPEE (110 aa). Acidic residues-rich tracts occupy residues 32-45 and 87-96; these read FSDEVEPATPEEGE and ECEDGPDGQE.

The protein belongs to the GAGE family.

In Homo sapiens (Human), this protein is G antigen 2E (GAGE2E).